The sequence spans 341 residues: Cyclin-Y (341 aa).

Gly2 is lipidated: N-myristoyl glycine. Ser21 and Ser25 each carry phosphoserine. Thr30 carries the phosphothreonine modification. Ser33 is modified (phosphoserine). Residue Thr37 is modified to Phosphothreonine. Thr67 carries the phosphothreonine; by CDK14 modification. Ser71 and Ser73 each carry phosphoserine; by CDK14. Phosphothreonine is present on Thr75. The residue at position 83 (Ser83) is a Phosphoserine; by CDK14. Ser99, Ser100, and Ser102 each carry phosphoserine. One can recognise a Cyclin N-terminal domain in the interval 143–265; sequence DIFDENLHPL…FLELLQFNIN (123 aa). Phosphoserine is present on Ser280. Phosphoserine; by CDK14 is present on residues Ser288 and Ser295. Residues Ser324 and Ser326 each carry the phosphoserine modification. Phosphothreonine is present on Thr331.

The protein belongs to the cyclin family. Cyclin Y subfamily. In terms of assembly, found in a complex with CAPRIN2, LRP6 and CDK14 during G2/M stage; CAPRIN2 functions as a scaffold for the complex by binding to CCNY via its N terminus and to CDK14 via its C terminus. Interacts with CDK14. Interacts with CDK16. Interacts with LRP6. Post-translationally, ubiquitinated; leading to its degradation. In terms of processing, heavily phosphorylated. Phosphorylation at Ser-71 and Ser-73 by CDK14 is enhanced during the G2 and M cell cycle phases, and creates a phosphodegron triggering SCF-dependent ubiquitination. In terms of tissue distribution, widely expressed.

Its subcellular location is the cell membrane. It is found in the nucleus. Positive regulatory subunit of the cyclin-dependent kinases CDK14/PFTK1 and CDK16. Acts as a cell-cycle regulator of Wnt signaling pathway during G2/M phase by recruiting CDK14/PFTK1 to the plasma membrane and promoting phosphorylation of LRP6, leading to the activation of the Wnt signaling pathway. Recruits CDK16 to the plasma membrane. Isoform 3 might play a role in the activation of MYC-mediated transcription. The protein is Cyclin-Y (CCNY) of Homo sapiens (Human).